Reading from the N-terminus, the 532-residue chain is Calnexin homolog 2 (532 aa).

A signal peptide spans 1-25 (MRERIITFVSLLLVALLSFPSVSYC). At 26-468 (DDQTILYESF…EKAETQPNLT (443 aa)) the chain is on the lumenal side. Ca(2+) contacts are provided by serine 34 and aspartate 65. A disulfide bridge connects residues cysteine 110 and cysteine 145. Tyrosine 114, lysine 116, tyrosine 136, and aspartate 143 together coordinate an alpha-D-glucoside. Residues 208 to 302 (NLLSAEDFEP…DEEDGEWEAP (95 aa)) are disordered. Residues 225 to 358 (IPDPEDKKPE…RDIPNPDYFE (134 aa)) form a p domain (Extended arm) region. The segment covering 226 to 242 (PDPEDKKPEDWDERAKI) has biased composition (basic and acidic residues). 5 tandem repeats follow at residues 227–238 (DPEDKKPEDWDE), 244–255 (DPNAVKPDDWDE), 263–274 (DEEAEKPEGWLD), 282–293 (DPEASKPEDWDD), and 297–307 (GEWEAPKVSNT). 4 X approximate repeats regions lie at residues 227-293 (DPED…DWDD) and 297-354 (GEWE…IPNP). 2 stretches are compositionally biased toward acidic residues: residues 252–283 (DWDE…VEDP) and 290–299 (DWDDEEDGEW). A disulfide bond links cysteine 309 and cysteine 315. 3 tandem repeats follow at residues 316 to 326 (GEWKRPMKRNP), 330 to 340 (GKWSSPLIDNP), and 344 to 354 (GIWKPRDIPNP). Glutamate 373 lines the an alpha-D-glucoside pocket. Aspartate 384 is a binding site for Ca(2+). An N-linked (GlcNAc...) asparagine glycan is attached at asparagine 466. A helical transmembrane segment spans residues 469 to 489 (IGVLISIVIVFLSLFFKLIFG). Residues 490–532 (GAKAKVEKKKPETAAETSTSEAKTEEKAEAVAAPRKRQTRRES) are Cytoplasmic-facing. Positions 493–532 (AKVEKKKPETAAETSTSEAKTEEKAEAVAAPRKRQTRRES) are disordered. Basic residues predominate over residues 523–532 (PRKRQTRRES).

It belongs to the calreticulin family.

Its subcellular location is the endoplasmic reticulum membrane. Its function is as follows. Calcium-binding protein that interacts with newly synthesized monoglucosylated glycoproteins in the endoplasmic reticulum. It may act in assisting protein assembly and/or in the retention within the ER of unassembled protein subunits. It seems to play a major role in the quality control apparatus of the ER by the retention of incorrectly folded proteins. This Arabidopsis thaliana (Mouse-ear cress) protein is Calnexin homolog 2.